We begin with the raw amino-acid sequence, 292 residues long: Phosphatidylserine decarboxylase proenzyme (292 aa).

Catalysis depends on charge relay system; for autoendoproteolytic cleavage activity residues aspartate 89, histidine 146, and serine 252. Residue serine 252 is the Schiff-base intermediate with substrate; via pyruvic acid; for decarboxylase activity of the active site. At serine 252 the chain carries Pyruvic acid (Ser); by autocatalysis.

This sequence belongs to the phosphatidylserine decarboxylase family. PSD-B subfamily. Prokaryotic type I sub-subfamily. As to quaternary structure, heterodimer of a large membrane-associated beta subunit and a small pyruvoyl-containing alpha subunit. It depends on pyruvate as a cofactor. In terms of processing, is synthesized initially as an inactive proenzyme. Formation of the active enzyme involves a self-maturation process in which the active site pyruvoyl group is generated from an internal serine residue via an autocatalytic post-translational modification. Two non-identical subunits are generated from the proenzyme in this reaction, and the pyruvate is formed at the N-terminus of the alpha chain, which is derived from the carboxyl end of the proenzyme. The autoendoproteolytic cleavage occurs by a canonical serine protease mechanism, in which the side chain hydroxyl group of the serine supplies its oxygen atom to form the C-terminus of the beta chain, while the remainder of the serine residue undergoes an oxidative deamination to produce ammonia and the pyruvoyl prosthetic group on the alpha chain. During this reaction, the Ser that is part of the protease active site of the proenzyme becomes the pyruvoyl prosthetic group, which constitutes an essential element of the active site of the mature decarboxylase.

It localises to the cell membrane. The catalysed reaction is a 1,2-diacyl-sn-glycero-3-phospho-L-serine + H(+) = a 1,2-diacyl-sn-glycero-3-phosphoethanolamine + CO2. It functions in the pathway phospholipid metabolism; phosphatidylethanolamine biosynthesis; phosphatidylethanolamine from CDP-diacylglycerol: step 2/2. Functionally, catalyzes the formation of phosphatidylethanolamine (PtdEtn) from phosphatidylserine (PtdSer). The chain is Phosphatidylserine decarboxylase proenzyme from Shewanella baltica (strain OS223).